The following is an 846-amino-acid chain: cGMP-dependent protein kinase (846 aa).

The tract at residues 1 to 22 (MRCNERNKKKAIFSNDDFSGED) is autoinhibitory segment. CNMP-binding domain regions lie at residues 51–166 (VCST…FIDS), 169–268 (VFDM…IVLG), 288–391 (IFRQ…LGDN), and 411–510 (IFRY…LQII). 3',5'-cyclic GMP is bound by residues lysine 106, glycine 115, glutamate 116, alanine 118, arginine 125, and serine 126. The 3',5'-cyclic GMP site is built by arginine 466, glycine 475, glutamate 476, alanine 478, arginine 485, and threonine 486. The Protein kinase domain maps to 534-791 (LETERIIGRG…FKDIKEHAFF (258 aa)). Residues 540–548 (IGRGTFGTV) and lysine 563 contribute to the ATP site. Catalysis depends on aspartate 657, which acts as the Proton acceptor. One can recognise an AGC-kinase C-terminal domain in the interval 792–846 (GNFNWDKLAGRLLEPPLVSKGETYAEDIDIKQIEEEDALNEGEPLDGDDSWDVDF). Residues 824-846 (IEEEDALNEGEPLDGDDSWDVDF) form a disordered region. Residues 825-846 (EEEDALNEGEPLDGDDSWDVDF) show a composition bias toward acidic residues.

It belongs to the protein kinase superfamily. AGC Ser/Thr protein kinase family. cGMP subfamily. As to quaternary structure, monomer. It depends on Mg(2+) as a cofactor. In terms of processing, autophosphorylated.

The protein localises to the cytoplasm. It localises to the endoplasmic reticulum membrane. It catalyses the reaction L-seryl-[protein] + ATP = O-phospho-L-seryl-[protein] + ADP + H(+). It carries out the reaction L-threonyl-[protein] + ATP = O-phospho-L-threonyl-[protein] + ADP + H(+). Activated by cGMP. Not activated by cAMP. cGMP binding allosterically triggers a conformational change at the alpha C-helix of cGMP-binding domain 4, which bridges the regulatory and catalytic domains, causing the capping triad, composed of Arg-477, Gln-525 and Asp-526, to form and stabilize the active conformation. The cGMP-binding domains acts cooperatively to activate PKG. Its function is as follows. Serine/threonine protein kinase which acts as a downstream effector of the second messenger cGMP. Controls the release of Ca(2+) from intracellular stores by regulating phosphoinositide biosynthesis. Ca(2+) signals are essential for merozoite and sporozoite invasion and egress from host hepatocytes and erythrocytes, and, in the mosquito vector, for gametocyte activation, and ookinete and sporozoite motility. During the host liver stage, regulates the initial invasion of host hepatocytes by sporozoites by regulating sporozoite motility and microneme exocytosis. Following parasite development in the hepatocytes, required for the release of merosomes, a vesicle containing the mature merozoites. During the asexual blood stage, required for the progression from schizont to the ring stage following merozoite invasion of host erythrocytes and for merozoite egress. Regulates merozoite egress by promoting the release of exonemes and micronemes which contain proteins essential for egress. Phosphorylates CDPK1 predominantly at the late schizont stage; phosphorylation at 'Ser-64' regulates CDPK1 protein-protein interaction and phosphorylation at 'Thr-231' may regulate CDPK1 kinase activity. In the mosquito vector, required for the initiation of gametogenesis induced by xanthurenic acid, specifically the gametocyte differentiation from the crescent-shaped form to the spherical form. Required for the gliding motility of ookinetes to reach and penetrate the midgut epithelium by promoting Ca(2+)-mediated activation of CDPK1 and CDPK4. Also required for microneme secretion in ookinete by promoting Ca(2+)-mediated activation of CDPK3. In Plasmodium vivax (strain Salvador I), this protein is cGMP-dependent protein kinase.